The chain runs to 242 residues: Mannosyl-3-phosphoglycerate phosphatase (242 aa).

Asp8 serves as the catalytic Nucleophile. Residues Asp8, Asp10, Ser169, and Asp204 each contribute to the Mg(2+) site.

This sequence belongs to the HAD-like hydrolase superfamily. MPGP family. Mg(2+) serves as cofactor.

It is found in the cytoplasm. It carries out the reaction 2-O-(alpha-D-mannosyl)-3-phosphoglycerate + H2O = (2R)-2-O-(alpha-D-mannosyl)-glycerate + phosphate. It functions in the pathway carbohydrate biosynthesis; 2-(alpha-D-mannosyl)-D-glycerate biosynthesis; 2-(alpha-D-mannosyl)-D-glycerate from GDP-alpha-D-mannose (MPG route): step 2/2. Functionally, hydrolyzes mannosyl-3-phosphoglycerate (MPG) to form the osmolyte mannosylglycerate (MG). This is Mannosyl-3-phosphoglycerate phosphatase from Pyrococcus furiosus (strain ATCC 43587 / DSM 3638 / JCM 8422 / Vc1).